The sequence spans 878 residues: Pyruvate, phosphate dikinase (878 aa).

The segment at 1-347 is N-terminal; sequence MKKLIYYFGS…LYILQTRTAK (347 aa). Arginine 96 provides a ligand contact to ATP. Positions 348–404 are linker 1; the sequence is RTAIAAIKIAVQMVEEKLISKEQALMRIDPESLNQLLHTRIDYSKGLTSIADGLPAS. Residues 405 to 502 are central; sequence PGAATGIIVF…ILKQDDIITI (98 aa). The residue at position 457 (threonine 457) is a Phosphothreonine; by PDRP1. Residue histidine 459 is the Tele-phosphohistidine intermediate of the active site. The interval 503 to 537 is linker 2; that stretch reads DGGTGKVFLGAVPLIQPTFSEESKLILEWADETSK. The tract at residues 538–878 is C-terminal; it reads LKIRTNAETV…AAAQAKIKHG (341 aa). Residues arginine 565, arginine 621, glutamate 749, glycine 770, threonine 771, asparagine 772, and aspartate 773 each coordinate substrate. Glutamate 749 lines the Mg(2+) pocket. Aspartate 773 is a Mg(2+) binding site. Cysteine 835 acts as the Proton donor in catalysis.

The protein belongs to the PEP-utilizing enzyme family. In terms of assembly, homodimer. Requires Mg(2+) as cofactor. Post-translationally, phosphorylation of Thr-457 in the dark inactivates the enzyme. Dephosphorylation upon light stimulation reactivates the enzyme.

It carries out the reaction pyruvate + phosphate + ATP = phosphoenolpyruvate + AMP + diphosphate + H(+). With respect to regulation, activated by light-induced dephosphorylation. Inhibited by dark-induced phosphorylation. Both reactions are catalyzed by PDRP1. Catalyzes the reversible phosphorylation of pyruvate and phosphate. The protein is Pyruvate, phosphate dikinase (ppdK) of Rickettsia bellii (strain RML369-C).